Consider the following 335-residue polypeptide: Probable G-protein coupled receptor 174 (335 aa).

At 1-27 the chain is on the extracellular side; that stretch reads MTDNFTCNKTDGDNTDFRYFIYAVTYT. Residues N4 and N8 are each glycosylated (N-linked (GlcNAc...) asparagine). A helical membrane pass occupies residues 28–48; it reads VILVPGLIGNILALWVFYGYM. Topologically, residues 49–53 are cytoplasmic; that stretch reads KETKR. A helical transmembrane segment spans residues 54–74; sequence AVVFMINLAIADLLQILSLPL. The Extracellular segment spans residues 75 to 91; that stretch reads RIFYYLNHDWPFGPGLC. C91 and C168 form a disulfide bridge. A helical membrane pass occupies residues 92–112; sequence MFCFYLKYVNMYASIYFLVCI. The Cytoplasmic portion of the chain corresponds to 113–134; that stretch reads SVRRFWFLMYPFRFNDCKQKYD. Residues 135 to 155 traverse the membrane as a helical segment; it reads LYISIIGWLIICLACLLFPLL. Over 156-182 the chain is Extracellular; sequence RTNDDTPGNRTKCFVDLPIRNVNLAQS. N164 carries an N-linked (GlcNAc...) asparagine glycan. Residues 183-203 traverse the membrane as a helical segment; the sequence is VAMITIGEVVGFVTPLMIVLY. Residues 204–231 are Cytoplasmic-facing; sequence CTWKTALSLQNKYPISQHLGEKKKALKM. A helical membrane pass occupies residues 232 to 252; the sequence is ILTCAGVFLVCFVPYHFSFPL. At 253-268 the chain is on the extracellular side; sequence DFLVKSNEIKSCFARR. The chain crosses the membrane as a helical span at residues 269-289; sequence VILIFHSVALCLASLNSCLDP. At 290-335 the chain is on the cytoplasmic side; that stretch reads VIYYFTTNEFRRRLSRQDLPDNIQLHTKSYKIASNHATSTVAAELC.

The protein belongs to the G-protein coupled receptor 1 family. As to quaternary structure, interacts with GNA13. Interacts with CCL21. In terms of tissue distribution, expressed in spleen and, at low levels, in brain. Highly expressed in developing and mature regulatory T-cells.

It is found in the cell membrane. In terms of biological role, G-protein-coupled receptor of lysophosphatidylserine (LysoPS) that plays different roles in immune response. Plays a negative role in regulatory T-cell accumulation and homeostasis. Under inflammatory conditions where LysoPS production increases, contributes to the down-regulation of regulatory T-cell activity to favor effector response. Mediates the suppression of IL-2 production in activated T-lymphocytes leading to inhibition of growth, proliferation and differentiation of T-cells. Mechanistically, acts via G(s)-containing heterotrimeric G proteins to trigger elevated cyclic AMP levels and protein kinase A/PKA activity, which may in turn act to antagonize proximal TCR signaling. Plays an important role in the initial period of sepsis through the regulation of macrophage polarization and pro- and anti-inflammatory cytokine secretions. Upon testosterone treatment, acts as a receptor for CCL21 and subsequently triggers through G(q)-alpha and G(12)/G(13) proteins a calcium flux leading to chemotactic effects on activated B-cells. Signals via GNA13 and PKA to promote CD86 up-regulation by follicular B-cells. The sequence is that of Probable G-protein coupled receptor 174 (Gpr174) from Mus musculus (Mouse).